Here is a 230-residue protein sequence, read N- to C-terminus: Cytidylate kinase (230 aa).

13-21 (GPAGTGKSS) serves as a coordination point for ATP.

It belongs to the cytidylate kinase family. Type 1 subfamily.

It localises to the cytoplasm. The catalysed reaction is CMP + ATP = CDP + ADP. It carries out the reaction dCMP + ATP = dCDP + ADP. The protein is Cytidylate kinase of Mycobacterium tuberculosis (strain ATCC 25177 / H37Ra).